The sequence spans 424 residues: Histidine--tRNA ligase (424 aa).

Belongs to the class-II aminoacyl-tRNA synthetase family. In terms of assembly, homodimer.

Its subcellular location is the cytoplasm. The enzyme catalyses tRNA(His) + L-histidine + ATP = L-histidyl-tRNA(His) + AMP + diphosphate + H(+). In Escherichia coli (strain SE11), this protein is Histidine--tRNA ligase.